A 412-amino-acid polypeptide reads, in one-letter code: MASSRISLRLVRRFASAAADGTTTAPSSGKISVSKAKSTLRKEHDPDKALKIYANVSDHSASPVSSRYAQELTVRRLAKCRRFSDIETLIESHKNDPKIKEEPFYSTLIRSYGQASMFNHAMRTFEQMDQYGTPRSAVSFNALLNACLHSKNFDKVPQLFDEIPQRYNKIIPDKISYGILIKSYCDSGTPEKAIEIMRQMQGKGMEVTTIAFTTILSSLYKKGELEVADNLWNEMVKKGCELDNAAYNVRIMSAQKESPERVKELIEEMSSMGLKPDTISYNYLMTAYCERGMLDEAKKVYEGLEGNNCAPNAATFRTLIFHLCYSRLYEQGYAIFKKSVYMHKIPDFNTLKHLVVGLVENKKRDDAKGLIRTVKKKFPPSFLNAWKKLEEELGLYSKTDAFPSSAKEAAAA.

The transit peptide at 1 to 14 (MASSRISLRLVRRF) directs the protein to the mitochondrion. A compositionally biased stretch (polar residues) spans 21-37 (GTTTAPSSGKISVSKAK). Residues 21–43 (GTTTAPSSGKISVSKAKSTLRKE) form a disordered region. PPR repeat units lie at residues 101–135 (EEPFYSTLIRSYGQASMFNHAMRTFEQMDQYGTPR), 136–166 (SAVSFNALLNACLHSKNFDKVPQLFDEIPQR), 173–207 (DKISYGILIKSYCDSGTPEKAIEIMRQMQGKGMEV), 208–242 (TTIAFTTILSSLYKKGELEVADNLWNEMVKKGCEL), 243–276 (DNAAYNVRIMSAQKESPERVKELIEEMSSMGLKP), 277–311 (DTISYNYLMTAYCERGMLDEAKKVYEGLEGNNCAP), 312–346 (NAATFRTLIFHLCYSRLYEQGYAIFKKSVYMHKIP), and 347–377 (DFNTLKHLVVGLVENKKRDDAKGLIRTVKKK).

The protein belongs to the PPR family. P subfamily. As to quaternary structure, component of the mitochondrial ribosome small subunit.

It is found in the mitochondrion. This chain is Small ribosomal subunit protein mL103 (rPPR7), found in Arabidopsis thaliana (Mouse-ear cress).